A 591-amino-acid chain; its full sequence is ESX-1 secretion system protein EccCb1 (591 aa).

FtsK domains are found at residues 65–259 (LQDV…NETQ) and 359–545 (LTPA…EKQE). ATP contacts are provided by residues 84 to 91 (GAPQTGKS) and 376 to 383 (GAAKSGKT).

Part of the ESX-1 / type VII secretion system (T7SS), which is composed of cytosolic and membrane components. The ESX-1 membrane complex is composed of EccB1, EccCa1, EccCb1, EccD1 and EccE1. Interacts with EccCa1, EspK and the C-terminus of EsxB. Residues 1-261 interact with EsxB and an artificial EsxB-EsxA heterodimer.

The protein resides in the cytoplasm. With respect to regulation, esxB binding to the second FtsK domain of EccCb1 causes multimerization; a subsequent unknown step relieves the allosteric inhibition of linker 2 on FtsK domain 1 (in EccCa1 subunit), activating the ATPase activity. Functionally, part of the ESX-1 specialized secretion system, which delivers several virulence factors to host cells during infection, including the key virulence factors EsxA (ESAT-6) and EsxB (CFP-10). EccCb1 may link the cytosolic components of the system with the membrane components. This chain is ESX-1 secretion system protein EccCb1, found in Mycobacterium tuberculosis (strain ATCC 25618 / H37Rv).